A 490-amino-acid chain; its full sequence is GTPase Der (490 aa).

EngA-type G domains are found at residues 3-166 (PVVA…MEDL) and 203-376 (IKLA…DSST). GTP is bound by residues 9–16 (GRPNVGKS), 56–60 (DTGGI), 118–121 (NKID), 209–216 (GRPNVGKS), 256–260 (DTAGV), and 321–324 (NKWD). One can recognise a KH-like domain in the interval 377–461 (RRVGTSMLTR…PIRIQFKEGE (85 aa)).

The protein belongs to the TRAFAC class TrmE-Era-EngA-EngB-Septin-like GTPase superfamily. EngA (Der) GTPase family. Associates with the 50S ribosomal subunit.

In terms of biological role, GTPase that plays an essential role in the late steps of ribosome biogenesis. This chain is GTPase Der, found in Shigella boydii serotype 18 (strain CDC 3083-94 / BS512).